The following is a 213-amino-acid chain: Endoplasmic reticulum vesicle protein 25 (213 aa).

The N-terminal stretch at 1 to 20 (MILRIPSLLYLFTLLTAVYA) is a signal peptide. Over 21 to 181 (VKFDLTSDRN…TNESTNQRVK (161 aa)) the chain is Lumenal. In terms of domain architecture, GOLD spans 33–122 (PSIIWNFASA…VRSVELDVDI (90 aa)). A helical membrane pass occupies residues 182-202 (VFSVLIICCTIGLGVWQLLHL). Topologically, residues 203-213 (RSFFKRKYLID) are cytoplasmic.

Belongs to the EMP24/GP25L family.

It localises to the endoplasmic reticulum membrane. It is found in the golgi apparatus membrane. In terms of biological role, constituent of COPII-coated endoplasmic reticulum-derived transport vesicles. Required for efficient transport of a subset of secretory proteins to the Golgi. Facilitates retrograde transport from the Golgi to the endoplasmic reticulum. This Cryptococcus neoformans var. neoformans serotype D (strain B-3501A) (Filobasidiella neoformans) protein is Endoplasmic reticulum vesicle protein 25 (ERV25).